We begin with the raw amino-acid sequence, 278 residues long: Diaminopimelate epimerase (278 aa).

Substrate contacts are provided by N13 and N66. C75 (proton donor) is an active-site residue. Substrate contacts are provided by residues 76–77, N162, N195, and 213–214; these read GN and ER. C222 serves as the catalytic Proton acceptor. 223–224 contributes to the substrate binding site; it reads GT.

The protein belongs to the diaminopimelate epimerase family. Homodimer.

The protein localises to the cytoplasm. The enzyme catalyses (2S,6S)-2,6-diaminopimelate = meso-2,6-diaminopimelate. It functions in the pathway amino-acid biosynthesis; L-lysine biosynthesis via DAP pathway; DL-2,6-diaminopimelate from LL-2,6-diaminopimelate: step 1/1. Its function is as follows. Catalyzes the stereoinversion of LL-2,6-diaminopimelate (L,L-DAP) to meso-diaminopimelate (meso-DAP), a precursor of L-lysine and an essential component of the bacterial peptidoglycan. This is Diaminopimelate epimerase from Trichodesmium erythraeum (strain IMS101).